The following is a 161-amino-acid chain: Nucleotide-binding protein Mmwyl1_2033 (161 aa).

The protein belongs to the YajQ family.

Its function is as follows. Nucleotide-binding protein. This Marinomonas sp. (strain MWYL1) protein is Nucleotide-binding protein Mmwyl1_2033.